The primary structure comprises 123 residues: Small ribosomal subunit protein uS13 (123 aa).

The tract at residues 94-123 is disordered; the sequence is RRGLPVRGQHTKNNARTRKGPARAIAGKKK.

This sequence belongs to the universal ribosomal protein uS13 family. Part of the 30S ribosomal subunit. Forms a loose heterodimer with protein S19. Forms two bridges to the 50S subunit in the 70S ribosome.

In terms of biological role, located at the top of the head of the 30S subunit, it contacts several helices of the 16S rRNA. In the 70S ribosome it contacts the 23S rRNA (bridge B1a) and protein L5 of the 50S subunit (bridge B1b), connecting the 2 subunits; these bridges are implicated in subunit movement. Contacts the tRNAs in the A and P-sites. This Oenococcus oeni (strain ATCC BAA-331 / PSU-1) protein is Small ribosomal subunit protein uS13.